Reading from the N-terminus, the 393-residue chain is Alpha-pyrone synthesis polyketide synthase-like Pks18 (393 aa).

A disordered region spans residues 1 to 26 (MNVSAESGAPRRAGQRHEVGLAQLPP). Catalysis depends on Cys175, which acts as the Nucleophile. Residue His221 participates in substrate binding.

The protein belongs to the thiolase-like superfamily. Chalcone/stilbene synthases family. As to quaternary structure, homodimer.

The protein operates within lipid metabolism; fatty acid biosynthesis. In terms of biological role, involved in the biosynthesis of tri- and tetraketide alpha-pyrones. Pks18 catalyzes the extension of medium- and long-chain aliphatic acyl-CoA substrates by using malonyl-CoA as an extender molecule to synthesize polyketide products. The protein is Alpha-pyrone synthesis polyketide synthase-like Pks18 (pks18) of Mycobacterium bovis (strain ATCC BAA-935 / AF2122/97).